A 245-amino-acid chain; its full sequence is Probable phosphatase YcdX (245 aa).

The Zn(2+) site is built by histidine 7, histidine 9, histidine 15, histidine 40, glutamate 73, histidine 101, histidine 131, aspartate 192, and histidine 194.

The protein belongs to the PHP family. As to quaternary structure, homotrimer. It depends on Zn(2+) as a cofactor.

The chain is Probable phosphatase YcdX from Salmonella heidelberg (strain SL476).